The primary structure comprises 250 residues: UPF0524 protein C3orf70 (250 aa).

A disordered region spans residues 201-250 (ESCDEDTEEGAELSSEEDYSPESSWEPDECTLLSPSQSDLEVIETIETTV). Over residues 202-229 (SCDEDTEEGAELSSEEDYSPESSWEPDE) the composition is skewed to acidic residues.

This sequence belongs to the UPF0524 family.

May play a role in neuronal and neurobehavioral development. This Homo sapiens (Human) protein is UPF0524 protein C3orf70 (C3orf70).